A 122-amino-acid chain; its full sequence is Large ribosomal subunit protein bL12 (122 aa).

Belongs to the bacterial ribosomal protein bL12 family. Homodimer. Part of the ribosomal stalk of the 50S ribosomal subunit. Forms a multimeric L10(L12)X complex, where L10 forms an elongated spine to which 2 to 4 L12 dimers bind in a sequential fashion. Binds GTP-bound translation factors.

In terms of biological role, forms part of the ribosomal stalk which helps the ribosome interact with GTP-bound translation factors. Is thus essential for accurate translation. This is Large ribosomal subunit protein bL12 from Deinococcus geothermalis (strain DSM 11300 / CIP 105573 / AG-3a).